Consider the following 151-residue polypeptide: Large ribosomal subunit protein eL8 (151 aa).

It belongs to the eukaryotic ribosomal protein eL8 family. Part of the 50S ribosomal subunit. Probably part of the RNase P complex.

It is found in the cytoplasm. In terms of biological role, multifunctional RNA-binding protein that recognizes the K-turn motif in ribosomal RNA, the RNA component of RNase P, box H/ACA, box C/D and box C'/D' sRNAs. This is Large ribosomal subunit protein eL8 from Pyrobaculum aerophilum (strain ATCC 51768 / DSM 7523 / JCM 9630 / CIP 104966 / NBRC 100827 / IM2).